The primary structure comprises 211 residues: Large ribosomal subunit protein uL4 (211 aa).

Over residues 46–55 (GNHATKTRSM) the composition is skewed to polar residues. Positions 46–89 (GNHATKTRSMVSGGGKKPWSQKGTGRARQGSTRAPHWVGGGTVH) are disordered.

It belongs to the universal ribosomal protein uL4 family. As to quaternary structure, part of the 50S ribosomal subunit.

Functionally, one of the primary rRNA binding proteins, this protein initially binds near the 5'-end of the 23S rRNA. It is important during the early stages of 50S assembly. It makes multiple contacts with different domains of the 23S rRNA in the assembled 50S subunit and ribosome. Forms part of the polypeptide exit tunnel. The sequence is that of Large ribosomal subunit protein uL4 from Leptospira interrogans serogroup Icterohaemorrhagiae serovar copenhageni (strain Fiocruz L1-130).